We begin with the raw amino-acid sequence, 131 residues long: Global transcriptional regulator Spx 1 (131 aa).

Cysteines 10 and 13 form a disulfide.

The protein belongs to the ArsC family. Spx subfamily. In terms of assembly, interacts with the C-terminal domain of the alpha subunit of the RNAP.

The protein resides in the cytoplasm. Functionally, global transcriptional regulator that plays a key role in stress response and exerts either positive or negative regulation of genes. Acts by interacting with the C-terminal domain of the alpha subunit of the RNA polymerase (RNAP). This interaction can enhance binding of RNAP to the promoter region of target genes and stimulate their transcription, or block interaction of RNAP with activator. The sequence is that of Global transcriptional regulator Spx 1 from Oceanobacillus iheyensis (strain DSM 14371 / CIP 107618 / JCM 11309 / KCTC 3954 / HTE831).